The chain runs to 143 residues: Actin-depolymerizing factor 5 (143 aa).

An ADF-H domain is found at 11 to 143; sequence GMRVTDECTS…GFDIIQDRAK (133 aa).

Belongs to the actin-binding proteins ADF family. As to expression, expressed exclusively in root tip meristem.

The protein resides in the cytoplasm. It is found in the cytoskeleton. Actin-depolymerizing protein. Severs actin filaments (F-actin) and binds to actin monomers. The protein is Actin-depolymerizing factor 5 (ADF5) of Arabidopsis thaliana (Mouse-ear cress).